Reading from the N-terminus, the 100-residue chain is MTERFQGRLADVIRRPLITEKATRALEFNQYTFEVDHRAAKPDIKAAIEQLFDVKVTGISTMNPPRRTRRMGRFAGKRAQVKKAVVRLAEGNSIQLFPES.

The protein belongs to the universal ribosomal protein uL23 family. As to quaternary structure, part of the 50S ribosomal subunit. Contacts protein L29, and trigger factor when it is bound to the ribosome.

One of the early assembly proteins it binds 23S rRNA. One of the proteins that surrounds the polypeptide exit tunnel on the outside of the ribosome. Forms the main docking site for trigger factor binding to the ribosome. This chain is Large ribosomal subunit protein uL23, found in Parasynechococcus marenigrum (strain WH8102).